The chain runs to 550 residues: Chaperonin GroEL (550 aa).

ATP-binding positions include 30-33 (TLGP), Lys-51, 87-91 (DGTTT), Gly-415, and Asp-495.

Belongs to the chaperonin (HSP60) family. Forms a cylinder of 14 subunits composed of two heptameric rings stacked back-to-back. Interacts with the co-chaperonin GroES.

The protein resides in the cytoplasm. The catalysed reaction is ATP + H2O + a folded polypeptide = ADP + phosphate + an unfolded polypeptide.. Functionally, together with its co-chaperonin GroES, plays an essential role in assisting protein folding. The GroEL-GroES system forms a nano-cage that allows encapsulation of the non-native substrate proteins and provides a physical environment optimized to promote and accelerate protein folding. This is Chaperonin GroEL from Shewanella woodyi (strain ATCC 51908 / MS32).